We begin with the raw amino-acid sequence, 425 residues long: Glutamyl-tRNA reductase (425 aa).

Residues 49–52, Ser107, 112–114, and Gln118 contribute to the substrate site; these read TCNR and EPQ. Cys50 serves as the catalytic Nucleophile. 187 to 192 serves as a coordination point for NADP(+); that stretch reads GAGETI.

Belongs to the glutamyl-tRNA reductase family. Homodimer.

The enzyme catalyses (S)-4-amino-5-oxopentanoate + tRNA(Glu) + NADP(+) = L-glutamyl-tRNA(Glu) + NADPH + H(+). It participates in porphyrin-containing compound metabolism; protoporphyrin-IX biosynthesis; 5-aminolevulinate from L-glutamyl-tRNA(Glu): step 1/2. In terms of biological role, catalyzes the NADPH-dependent reduction of glutamyl-tRNA(Glu) to glutamate 1-semialdehyde (GSA). This is Glutamyl-tRNA reductase from Pseudomonas putida (strain ATCC 700007 / DSM 6899 / JCM 31910 / BCRC 17059 / LMG 24140 / F1).